Here is a 146-residue protein sequence, read N- to C-terminus: Protein PBDC1 homolog (146 aa).

The protein belongs to the PBDC1 family.

Its subcellular location is the cytoplasm. The chain is Protein PBDC1 homolog from Saccharomyces cerevisiae (strain ATCC 204508 / S288c) (Baker's yeast).